A 984-amino-acid chain; its full sequence is MORC family CW-type zinc finger protein 1 (984 aa).

A coiled-coil region spans residues 284-353; that stretch reads AFKDEVKKAE…RELKTARTLS (70 aa). A CW-type zinc finger spans residues 477 to 531; the sequence is AMGIPFIIQCDLCLKWRVLPSSTNYQEKEFFDIWICANNPNRLENSCHQVECLPS. Zn(2+)-binding residues include cysteine 486, cysteine 489, cysteine 512, and cysteine 523. Coiled-coil stretches lie at residues 737–761 and 900–934; these read DVSL…CNDV and EISL…LQLG.

Its subcellular location is the nucleus. Its function is as follows. Required for spermatogenesis. Essential for de novo DNA methylation and silencing of transposable elements in the male embryonic germ cells. This chain is MORC family CW-type zinc finger protein 1, found in Homo sapiens (Human).